Reading from the N-terminus, the 111-residue chain is Large ribosomal subunit protein uL22 (111 aa).

Belongs to the universal ribosomal protein uL22 family. In terms of assembly, part of the 50S ribosomal subunit.

In terms of biological role, this protein binds specifically to 23S rRNA; its binding is stimulated by other ribosomal proteins, e.g. L4, L17, and L20. It is important during the early stages of 50S assembly. It makes multiple contacts with different domains of the 23S rRNA in the assembled 50S subunit and ribosome. The globular domain of the protein is located near the polypeptide exit tunnel on the outside of the subunit, while an extended beta-hairpin is found that lines the wall of the exit tunnel in the center of the 70S ribosome. The chain is Large ribosomal subunit protein uL22 from Wigglesworthia glossinidia brevipalpis.